A 329-amino-acid chain; its full sequence is NAD kinase (329 aa).

The tract at residues 1–26 (MTTPGTDHNADQGADSGDKATKAASG) is disordered. The active-site Proton acceptor is the D104. Residues 104–105 (DG), R109, 179–180 (NE), D209, and 220–225 (TAYAFS) each bind NAD(+).

The protein belongs to the NAD kinase family. It depends on a divalent metal cation as a cofactor.

The protein localises to the cytoplasm. The enzyme catalyses NAD(+) + ATP = ADP + NADP(+) + H(+). Involved in the regulation of the intracellular balance of NAD and NADP, and is a key enzyme in the biosynthesis of NADP. Catalyzes specifically the phosphorylation on 2'-hydroxyl of the adenosine moiety of NAD to yield NADP. The chain is NAD kinase from Corynebacterium jeikeium (strain K411).